Reading from the N-terminus, the 343-residue chain is Dihydroorotase (343 aa).

Residues H14 and H16 each contribute to the Zn(2+) site. Substrate contacts are provided by residues 16 to 18 and N42; that span reads HLR. Positions 99, 136, and 174 each coordinate Zn(2+). K99 bears the N6-carboxylysine mark. Residue H136 coordinates substrate. L219 contacts substrate. D247 provides a ligand contact to Zn(2+). D247 is a catalytic residue. Residues H251 and A263 each coordinate substrate.

This sequence belongs to the metallo-dependent hydrolases superfamily. DHOase family. Class II DHOase subfamily. As to quaternary structure, homodimer. Requires Zn(2+) as cofactor.

The catalysed reaction is (S)-dihydroorotate + H2O = N-carbamoyl-L-aspartate + H(+). Its pathway is pyrimidine metabolism; UMP biosynthesis via de novo pathway; (S)-dihydroorotate from bicarbonate: step 3/3. In terms of biological role, catalyzes the reversible cyclization of carbamoyl aspartate to dihydroorotate. In Psychromonas ingrahamii (strain DSM 17664 / CCUG 51855 / 37), this protein is Dihydroorotase.